Here is a 52-residue protein sequence, read N- to C-terminus: MAKFYKIWLIFDPRRVFVAQGVFLFLLAAMIHLVVLSSGLNWFEAAAAVGGQ.

The Cytoplasmic segment spans residues 1–15; that stretch reads MAKFYKIWLIFDPRR. A helical membrane pass occupies residues 16–36; the sequence is VFVAQGVFLFLLAAMIHLVVL. Residue His32 coordinates a bacteriochlorophyll. The Periplasmic portion of the chain corresponds to 37-52; the sequence is SSGLNWFEAAAAVGGQ.

It belongs to the antenna complex alpha subunit family. As to quaternary structure, the core complex is formed by different alpha and beta chains, binding bacteriochlorophyll molecules, and arranged most probably in tetrameric structures disposed around the reaction center. The non-pigmented gamma chains may constitute additional components.

The protein localises to the cell inner membrane. Functionally, antenna complexes are light-harvesting systems, which transfer the excitation energy to the reaction centers. The protein is Light-harvesting protein B-870 alpha chain (pufA) of Roseobacter denitrificans (strain ATCC 33942 / OCh 114) (Erythrobacter sp. (strain OCh 114)).